We begin with the raw amino-acid sequence, 176 residues long: uncharacterized protein (176 aa).

This is an uncharacterized protein from Methanocaldococcus jannaschii (strain ATCC 43067 / DSM 2661 / JAL-1 / JCM 10045 / NBRC 100440) (Methanococcus jannaschii).